The chain runs to 183 residues: Glutathione-regulated potassium-efflux system ancillary protein KefG (183 aa).

This sequence belongs to the NAD(P)H dehydrogenase (quinone) family. KefG subfamily. Interacts with KefB.

Its subcellular location is the cell inner membrane. The enzyme catalyses a quinone + NADH + H(+) = a quinol + NAD(+). It catalyses the reaction a quinone + NADPH + H(+) = a quinol + NADP(+). Its function is as follows. Regulatory subunit of a potassium efflux system that confers protection against electrophiles. Required for full activity of KefB. The sequence is that of Glutathione-regulated potassium-efflux system ancillary protein KefG from Salmonella gallinarum (strain 287/91 / NCTC 13346).